A 367-amino-acid polypeptide reads, in one-letter code: Regulator of fusion ref-1 (367 aa).

Residues 1–10 (MVLISTPPPA) are compositionally biased toward pro residues. Residues 1–24 (MVLISTPPPAYAHNRKTSQEKKRR) are disordered. The basic motif 1 stretch occupies residues 11–24 (YAHNRKTSQEKKRR). The bHLH 1 domain maps to 11–63 (YAHNRKTSQEKKRRDEINAKIKELQLLIQNESDNEKMTQGDVLNRAVEVVSRM). Positions 25 to 63 (DEINAKIKELQLLIQNESDNEKMTQGDVLNRAVEVVSRM) are helix-loop-helix motif 1. Disordered regions lie at residues 133–177 (RSES…RRDR) and 313–367 (ATSP…RPWE). Over residues 141–157 (SSMSYRSQSSSPSTSES) the composition is skewed to low complexity. Positions 161–177 (IDRKEVKKNREQDRRDR) are enriched in basic and acidic residues. The tract at residues 162–175 (DRKEVKKNREQDRR) is basic motif 2. The 58-residue stretch at 162-219 (DRKEVKKNREQDRRDRQGEAFDALKNFIIENKLMTSHQVEKMQRLNTLDIIIAYIQNK) folds into the bHLH 2 domain. The segment at 176–219 (DRQGEAFDALKNFIIENKLMTSHQVEKMQRLNTLDIIIAYIQNK) is helix-loop-helix motif 2. Residues 313–354 (ATSPKSQQSPSYSLDSPPPSSDTSSSSIETPSTPNENSNSNP) show a composition bias toward low complexity. A compositionally biased stretch (basic residues) spans 356–367 (ASRKSKLFRPWE).

Interacts with unc-37.

It localises to the nucleus. Probable transcription factor. Binds 5'-TGCCACGTGTCCA-3' in vitro, probably via the E-box motif 5'-CA[TC][AG]TG-3'. Acts in embryonic development in a Notch-dependent manner, perhaps as a direct target of transcriptional regulator lag-1 in the Notch signaling pathway. Also acts in embryonic development in a Notch-independent manner. Plays a role in both Notch-dependent and -independent pathways in the execution of neuronal lineage decisions in the embryo. Also involved in regulating cell fate leading to formation of neuronal structures known as postdeirids. Involved in the pattern of cell fusion with a large syncytium known as hyp-7, during larval development, in hermaphrodites. Plays a role in regulating the activity of homeobox protein mab-5 in Pn.p cells. The sequence is that of Regulator of fusion ref-1 from Caenorhabditis elegans.